Here is a 132-residue protein sequence, read N- to C-terminus: Small ribosomal subunit protein uS9 (132 aa).

This sequence belongs to the universal ribosomal protein uS9 family.

The polypeptide is Small ribosomal subunit protein uS9 (rps9) (Halobacterium salinarum (strain ATCC 700922 / JCM 11081 / NRC-1) (Halobacterium halobium)).